The chain runs to 571 residues: Glycine--tRNA ligase (571 aa).

2 residues coordinate substrate: Arg-99 and Glu-165. ATP is bound by residues 197-199 (RNE), 207-212 (IRLREF), 324-325 (EC), and 443-446 (GIDR). 212 to 216 (FTQAE) provides a ligand contact to substrate. Substrate is bound at residue 439–443 (EPSFG).

Belongs to the class-II aminoacyl-tRNA synthetase family.

The protein resides in the cytoplasm. The enzyme catalyses tRNA(Gly) + glycine + ATP = glycyl-tRNA(Gly) + AMP + diphosphate. Its function is as follows. Catalyzes the attachment of glycine to tRNA(Gly). This Pyrococcus abyssi (strain GE5 / Orsay) protein is Glycine--tRNA ligase.